The sequence spans 130 residues: Ribonuclease P protein component 2 (130 aa).

It belongs to the eukaryotic/archaeal RNase P protein component 2 family. As to quaternary structure, consists of a catalytic RNA component and at least 5 protein subunits.

Its subcellular location is the cytoplasm. It carries out the reaction Endonucleolytic cleavage of RNA, removing 5'-extranucleotides from tRNA precursor.. Functionally, part of ribonuclease P, a protein complex that generates mature tRNA molecules by cleaving their 5'-ends. The polypeptide is Ribonuclease P protein component 2 (Methanococcus maripaludis (strain DSM 14266 / JCM 13030 / NBRC 101832 / S2 / LL)).